A 117-amino-acid polypeptide reads, in one-letter code: Ribonuclease P protein component (117 aa).

Belongs to the RnpA family. As to quaternary structure, consists of a catalytic RNA component (M1 or rnpB) and a protein subunit.

It catalyses the reaction Endonucleolytic cleavage of RNA, removing 5'-extranucleotides from tRNA precursor.. Functionally, RNaseP catalyzes the removal of the 5'-leader sequence from pre-tRNA to produce the mature 5'-terminus. It can also cleave other RNA substrates such as 4.5S RNA. The protein component plays an auxiliary but essential role in vivo by binding to the 5'-leader sequence and broadening the substrate specificity of the ribozyme. This chain is Ribonuclease P protein component, found in Aliivibrio salmonicida (strain LFI1238) (Vibrio salmonicida (strain LFI1238)).